A 663-amino-acid chain; its full sequence is Terreic acid cluster-specific transcription factor atF (663 aa).

Positions Met1–Ala20 are enriched in polar residues. 2 disordered regions span residues Met1–Thr28 and Thr55–Gln126. The zn(2)-C6 fungal-type DNA-binding region spans Cys34 to Cys60. The span at Thr55–Ser64 shows a compositional bias: basic residues. Low complexity-rich tracts occupy residues Ser73 to Gln88 and Ala105 to Ser125.

The protein resides in the nucleus. Transcription factor that regulates the expression of the gene cluster that mediates the biosynthesis of terreic acid, a quinone epoxide inhibitor of Bruton's tyrosine kinase. The protein is Terreic acid cluster-specific transcription factor atF of Aspergillus terreus (strain NIH 2624 / FGSC A1156).